The chain runs to 295 residues: Light-independent protochlorophyllide reductase iron-sulfur ATP-binding protein (295 aa).

ATP-binding positions include 10–15 (GIGKST) and Lys39. Residue Ser14 coordinates Mg(2+). [4Fe-4S] cluster is bound by residues Cys95 and Cys129. 180–181 (NR) lines the ATP pocket. Residues 275 to 289 (TKDKKENKKEDKENS) show a composition bias toward basic and acidic residues. The interval 275–295 (TKDKKENKKEDKENSADFTWL) is disordered.

The protein belongs to the NifH/BchL/ChlL family. In terms of assembly, homodimer. Protochlorophyllide reductase is composed of three subunits; ChlL, ChlN and ChlB. [4Fe-4S] cluster serves as cofactor.

It is found in the plastid. Its subcellular location is the chloroplast. The enzyme catalyses chlorophyllide a + oxidized 2[4Fe-4S]-[ferredoxin] + 2 ADP + 2 phosphate = protochlorophyllide a + reduced 2[4Fe-4S]-[ferredoxin] + 2 ATP + 2 H2O. Its pathway is porphyrin-containing compound metabolism; chlorophyll biosynthesis (light-independent). Its function is as follows. Component of the dark-operative protochlorophyllide reductase (DPOR) that uses Mg-ATP and reduced ferredoxin to reduce ring D of protochlorophyllide (Pchlide) to form chlorophyllide a (Chlide). This reaction is light-independent. The L component serves as a unique electron donor to the NB-component of the complex, and binds Mg-ATP. In Physcomitrium patens (Spreading-leaved earth moss), this protein is Light-independent protochlorophyllide reductase iron-sulfur ATP-binding protein.